A 152-amino-acid polypeptide reads, in one-letter code: MFRGATLVNLDSKGRLSVPTRYREELLGNAAGQMVCTIDIHHPCLLLYPLPEWEIIEHKLSRLSSMNPVERRVQRLLLGHASECQLDNAGRLLIAPVLRQHAGLTKEVMLVGQFNKFELWDETTWHQQVREDIDAEQSITENLSERLQDLSL.

2 SpoVT-AbrB domains span residues 5–52 (ATLV…PLPE) and 81–124 (ASEC…DETT).

Belongs to the MraZ family. As to quaternary structure, forms oligomers.

Its subcellular location is the cytoplasm. It is found in the nucleoid. Its function is as follows. Negatively regulates its own expression and that of the subsequent genes in the proximal part of the division and cell wall (dcw) gene cluster. Acts by binding directly to DNA. May also regulate the expression of genes outside the dcw cluster. This is Transcriptional regulator MraZ from Escherichia fergusonii (strain ATCC 35469 / DSM 13698 / CCUG 18766 / IAM 14443 / JCM 21226 / LMG 7866 / NBRC 102419 / NCTC 12128 / CDC 0568-73).